The following is a 416-amino-acid chain: Neamine transaminase NeoN (416 aa).

At lysine 231 the chain carries N6-(pyridoxal phosphate)lysine.

Belongs to the class-III pyridoxal-phosphate-dependent aminotransferase family. The cofactor is pyridoxal 5'-phosphate.

It catalyses the reaction neomycin C + 2-oxoglutarate = 6'''-deamino-6'''-oxoneomycin C + L-glutamate. The catalysed reaction is neamine + 2-oxoglutarate = 6'-oxoparomamine + L-glutamate. It participates in antibiotic biosynthesis; neomycin biosynthesis. 6'-oxoglucosaminyl:L-glutamate aminotransferase that catalyzes pyridoxal-5'-phosphate-mediated transamination for the conversion of paromamine to neamine in the biosynthetic pathway of neomycin. Also able to catalyze deamination at C-6''' of neomycin. The protein is Neamine transaminase NeoN (neoN) of Streptomyces fradiae (Streptomyces roseoflavus).